The following is a 308-amino-acid chain: Putative hydrolase MT0526 (308 aa).

The tract at residues 1–48 (MMVSSHLGSPDQAGHVDLASPADPPPPDASASHSPVDMPAPVAAAGSD) is disordered. The active-site Nucleophile is the Asp62. Asp62, Asp64, and Asp237 together coordinate Mg(2+). The active-site Proton donor is Asp64.

This sequence belongs to the HAD-like hydrolase superfamily. SerB family. Requires Mg(2+) as cofactor.

The chain is Putative hydrolase MT0526 from Mycobacterium tuberculosis (strain CDC 1551 / Oshkosh).